Reading from the N-terminus, the 514-residue chain is Na(+)/H(+) antiporter NhaB (514 aa).

Helical transmembrane passes span 23–43, 63–83, 97–117, 120–140, 144–164, 202–222, 238–258, 303–323, 357–377, 391–411, 447–467, and 475–495; these read LALL…PFVA, PLLP…TSAA, LLLM…LFIF, LLLS…AAAF, FLDA…FYGI, LMMH…VGEP, FFLR…LTCM, AVIG…VGLI, LTVF…APII, LFYL…VGTI, ATPN…APLI, and VWMA…CVEF.

This sequence belongs to the NhaB Na(+)/H(+) (TC 2.A.34) antiporter family.

It localises to the cell inner membrane. It catalyses the reaction 2 Na(+)(in) + 3 H(+)(out) = 2 Na(+)(out) + 3 H(+)(in). Na(+)/H(+) antiporter that extrudes sodium in exchange for external protons. The polypeptide is Na(+)/H(+) antiporter NhaB (Salmonella agona (strain SL483)).